The following is a 451-amino-acid chain: NADP-specific glutamate dehydrogenase (451 aa).

Residue Lys-113 is part of the active site. Ser-252 is subject to Phosphoserine.

This sequence belongs to the Glu/Leu/Phe/Val dehydrogenases family. In terms of assembly, homohexamer.

The catalysed reaction is L-glutamate + NADP(+) + H2O = 2-oxoglutarate + NH4(+) + NADPH + H(+). This chain is NADP-specific glutamate dehydrogenase (gdh1), found in Schizosaccharomyces pombe (strain 972 / ATCC 24843) (Fission yeast).